The primary structure comprises 175 residues: uncharacterized protein (175 aa).

It belongs to the asfivirus B175L family.

This is an uncharacterized protein from Ornithodoros (relapsing fever ticks).